The primary structure comprises 299 residues: Protoheme IX farnesyltransferase (299 aa).

A run of 9 helical transmembrane segments spans residues 17–37 (VVAL…PAPY), 41–61 (GLLV…AAVF), 91–111 (ALMW…LFVN), 113–133 (ITMV…TLYL), 141–161 (IVIG…AVSG), 168–188 (ACLL…ALAI), 207–227 (GLAY…LVSL), 228–248 (LPYL…ALGI), and 266–286 (IAWC…VTLL).

Belongs to the UbiA prenyltransferase family. Protoheme IX farnesyltransferase subfamily.

It is found in the cell inner membrane. The catalysed reaction is heme b + (2E,6E)-farnesyl diphosphate + H2O = Fe(II)-heme o + diphosphate. It participates in porphyrin-containing compound metabolism; heme O biosynthesis; heme O from protoheme: step 1/1. Its function is as follows. Converts heme B (protoheme IX) to heme O by substitution of the vinyl group on carbon 2 of heme B porphyrin ring with a hydroxyethyl farnesyl side group. This Ruthia magnifica subsp. Calyptogena magnifica protein is Protoheme IX farnesyltransferase.